We begin with the raw amino-acid sequence, 298 residues long: Probable 3-hydroxyacyl-CoA dehydrogenase F54C8.1 (298 aa).

The protein belongs to the 3-hydroxyacyl-CoA dehydrogenase family. Homodimer.

Its subcellular location is the mitochondrion matrix. The catalysed reaction is a (3S)-3-hydroxyacyl-CoA + NAD(+) = a 3-oxoacyl-CoA + NADH + H(+). Its pathway is lipid metabolism; fatty acid beta-oxidation. This chain is Probable 3-hydroxyacyl-CoA dehydrogenase F54C8.1, found in Caenorhabditis elegans.